Reading from the N-terminus, the 217-residue chain is Probable transaldolase (217 aa).

The active-site Schiff-base intermediate with substrate is lysine 83.

This sequence belongs to the transaldolase family. Type 3B subfamily.

It is found in the cytoplasm. It carries out the reaction D-sedoheptulose 7-phosphate + D-glyceraldehyde 3-phosphate = D-erythrose 4-phosphate + beta-D-fructose 6-phosphate. The protein operates within carbohydrate degradation; pentose phosphate pathway; D-glyceraldehyde 3-phosphate and beta-D-fructose 6-phosphate from D-ribose 5-phosphate and D-xylulose 5-phosphate (non-oxidative stage): step 2/3. Functionally, transaldolase is important for the balance of metabolites in the pentose-phosphate pathway. The polypeptide is Probable transaldolase (Anaeromyxobacter dehalogenans (strain 2CP-C)).